The following is a 553-amino-acid chain: Arginine--tRNA ligase (553 aa).

The 'HIGH' region signature appears at 130–140 (ANPTGDLHIGH).

This sequence belongs to the class-I aminoacyl-tRNA synthetase family. In terms of assembly, monomer.

The protein localises to the cytoplasm. It catalyses the reaction tRNA(Arg) + L-arginine + ATP = L-arginyl-tRNA(Arg) + AMP + diphosphate. This chain is Arginine--tRNA ligase, found in Staphylococcus epidermidis (strain ATCC 12228 / FDA PCI 1200).